The primary structure comprises 101 residues: Urease subunit beta (101 aa).

Belongs to the urease beta subunit family. In terms of assembly, heterotrimer of UreA (gamma), UreB (beta) and UreC (alpha) subunits. Three heterotrimers associate to form the active enzyme.

Its subcellular location is the cytoplasm. The catalysed reaction is urea + 2 H2O + H(+) = hydrogencarbonate + 2 NH4(+). The protein operates within nitrogen metabolism; urea degradation; CO(2) and NH(3) from urea (urease route): step 1/1. The protein is Urease subunit beta of Actinobacillus pleuropneumoniae serotype 5b (strain L20).